The primary structure comprises 212 residues: MTGAESLVVEVEASRRILGDGFAGAVRFGELLAEHGEERGLIGPREVPRLWLRHIVNSAAVARWLPDAGSVADVGTGAGLPGVVLALMRPDLDVHLVEPMERRVAWLSELRDELDLDNVTLHQVQAQELHGKLKVQAVTARAVAPLGKLARWTLPLLSRRGVLLAQKGARAQAELDEAAVDLRDFAVDTASVHDVDLLGDGETTRVVEVRLR.

S-adenosyl-L-methionine contacts are provided by residues glycine 75, leucine 80, 126–127 (AQ), and arginine 141.

Belongs to the methyltransferase superfamily. RNA methyltransferase RsmG family.

The protein localises to the cytoplasm. Functionally, specifically methylates the N7 position of guanine in position 518 of 16S rRNA. The polypeptide is Ribosomal RNA small subunit methyltransferase G (Beutenbergia cavernae (strain ATCC BAA-8 / DSM 12333 / CCUG 43141 / JCM 11478 / NBRC 16432 / NCIMB 13614 / HKI 0122)).